Here is a 445-residue protein sequence, read N- to C-terminus: MQEKIGLIPRSILRTLDRFRKQLFPNQETKTITLQEFQVSRQQMQVSVVTFLTLVLVPLGVNICGKTFLVKPFTQFLWNNYQTELFLNQFQAQRAFTEMQEIEDVLFFDSLIQNTNFCFNCSKAWNNYFVMQPSSYSSNSNFVIQKPDLANSQSKNSTCHNSKLILQKNVFEIYKFSENTDFFKDKMYGEQIHDGVKNSYNEFSSKASNALSNLEAPLYLGSEASLPPKLKNFDSRIFTANQLNRDDKLIYMSLQEQPLVKKQNFLDKYQFAKHETQENVINKPEIYKIEGLLQTSEKDEMELRQDKLVALAIQYNEESIDAISNLIGDALTCITITFLFFGLKVQILILQSFLTESFYSLSNANRSLIIIIVTDLLVGYHSPQGWKLLTQLILQHYGFPETKLFILCFIGTFPVILDTIFKYWIFRHLNRISPTTVLTYHRMIE.

Helical transmembrane passes span 44–64 (MQVS…VNIC), 330–350 (ALTC…ILIL), 368–388 (LIII…GWKL), and 405–425 (FILC…KYWI).

The protein belongs to the CemA family.

The protein localises to the plastid. Its subcellular location is the chloroplast inner membrane. The enzyme catalyses K(+)(in) + H(+)(out) = K(+)(out) + H(+)(in). Its function is as follows. Contributes to K(+)/H(+) antiport activity by supporting proton efflux to control proton extrusion and homeostasis in chloroplasts in a light-dependent manner to modulate photosynthesis. Prevents excessive induction of non-photochemical quenching (NPQ) under continuous-light conditions. Indirectly promotes efficient inorganic carbon uptake into chloroplasts. The chain is Potassium/proton antiporter CemA from Pleurastrum terricola (Filamentous green alga).